Consider the following 62-residue polypeptide: Large ribosomal subunit protein bL28 (62 aa).

It belongs to the bacterial ribosomal protein bL28 family.

The sequence is that of Large ribosomal subunit protein bL28 from Helicobacter pylori (strain Shi470).